A 379-amino-acid chain; its full sequence is tRNA-specific 2-thiouridylase MnmA (379 aa).

ATP contacts are provided by residues 23-30 and leucine 49; that span reads AMSGGVDS. The active-site Nucleophile is cysteine 117. A disulfide bridge links cysteine 117 with cysteine 214. Residue glycine 141 coordinates ATP. The interval 163 to 165 is interaction with tRNA; that stretch reads RDQ. The active-site Cysteine persulfide intermediate is cysteine 214.

The protein belongs to the MnmA/TRMU family.

Its subcellular location is the cytoplasm. The catalysed reaction is S-sulfanyl-L-cysteinyl-[protein] + uridine(34) in tRNA + AH2 + ATP = 2-thiouridine(34) in tRNA + L-cysteinyl-[protein] + A + AMP + diphosphate + H(+). Its function is as follows. Catalyzes the 2-thiolation of uridine at the wobble position (U34) of tRNA, leading to the formation of s(2)U34. This is tRNA-specific 2-thiouridylase MnmA from Cereibacter sphaeroides (strain KD131 / KCTC 12085) (Rhodobacter sphaeroides).